The following is a 282-amino-acid chain: Putative 4-diphosphocytidyl-2-C-methyl-D-erythritol kinase (282 aa).

Residue K9 is part of the active site. 93–103 is a binding site for ATP; sequence PVSAGLAGGSA. The active site involves D135.

It belongs to the GHMP kinase family. IspE subfamily.

The enzyme catalyses 4-CDP-2-C-methyl-D-erythritol + ATP = 4-CDP-2-C-methyl-D-erythritol 2-phosphate + ADP + H(+). Its function is as follows. Catalyzes the phosphorylation of the position 2 hydroxy group of 4-diphosphocytidyl-2C-methyl-D-erythritol. In Staphylococcus aureus (strain bovine RF122 / ET3-1), this protein is Putative 4-diphosphocytidyl-2-C-methyl-D-erythritol kinase.